A 598-amino-acid polypeptide reads, in one-letter code: Aspartate--tRNA(Asp/Asn) ligase (598 aa).

Glu177 is a binding site for L-aspartate. Residues 201–204 (QLFK) are aspartate. Arg223 provides a ligand contact to L-aspartate. ATP contacts are provided by residues 223–225 (RDE) and Gln232. His456 is a binding site for L-aspartate. Glu493 is a binding site for ATP. An L-aspartate-binding site is contributed by Arg500. 545-548 (GLDR) lines the ATP pocket.

This sequence belongs to the class-II aminoacyl-tRNA synthetase family. Type 1 subfamily. As to quaternary structure, homodimer.

It is found in the cytoplasm. The catalysed reaction is tRNA(Asx) + L-aspartate + ATP = L-aspartyl-tRNA(Asx) + AMP + diphosphate. Its function is as follows. Aspartyl-tRNA synthetase with relaxed tRNA specificity since it is able to aspartylate not only its cognate tRNA(Asp) but also tRNA(Asn). Reaction proceeds in two steps: L-aspartate is first activated by ATP to form Asp-AMP and then transferred to the acceptor end of tRNA(Asp/Asn). This chain is Aspartate--tRNA(Asp/Asn) ligase, found in Prochlorococcus marinus (strain MIT 9215).